The sequence spans 330 residues: 2-methyl-6-phytyl-1,4-hydroquinone methyltransferase 1, chloroplastic (330 aa).

A chloroplast-targeting transit peptide spans 1–45; sequence MKEMVSSSTFRAPGGLGFLGPSKIGLIPLRNRSGVRSRVKYIAPK. Residues 46–295 are Chloroplast intermembrane-facing; that stretch reads CAVSSARPAS…DVEKPVNPFT (250 aa). An SAM motif I region spans residues 107 to 116; the sequence is VVDVGGGTGF. Residues 152–165 are SAM motif II; sequence VNIIEGDAEDLPYP. The interval 193-206 is SAM motif III; it reads RVLKLGGVACLIGP. Residues 296–316 form a helical membrane-spanning segment; that stretch reads FIFRFVMGTICASYYVLVPIY. Over 317–330 the chain is Stromal; the sequence is MWMKDQIVPKDQPI.

It belongs to the class I-like SAM-binding methyltransferase superfamily. MPBQ/MBSQ MT family.

The protein localises to the plastid. It is found in the chloroplast inner membrane. It catalyses the reaction 2-methyl-6-phytyl-1,4-benzene-1,4-diol + S-adenosyl-L-methionine = 2,3-dimethyl-6-phytylbenzene-1,4-diol + S-adenosyl-L-homocysteine + H(+). The catalysed reaction is 2-methyl-6-(all-trans-nonaprenyl)benzene-1,4-diol + S-adenosyl-L-methionine = plastoquinol-9 + S-adenosyl-L-homocysteine + H(+). It carries out the reaction 6-geranylgeranyl-2-methylbenzene-1,4-diol + S-adenosyl-L-methionine = 6-geranylgeranyl-2,3-dimethylbenzene-1,4-diol + S-adenosyl-L-homocysteine + H(+). It functions in the pathway cofactor biosynthesis; tocopherol biosynthesis. Functionally, involved in a key methylation step in both tocopherols (vitamin E) and plastoquinone synthesis. Catalyzes the conversion of 2-methyl-6-phytyl-1,4-hydroquinone (MPBQ) to 2,3-dimethyl-6-phytyl-1,4-hydroquinone (DMPQ, a substrate for tocopherol cyclase), and 2-methyl-6-solanyl-1,4-benzoquinone (MSBQ) to plastoquinone. This chain is 2-methyl-6-phytyl-1,4-hydroquinone methyltransferase 1, chloroplastic (ARSM2), found in Oryza sativa subsp. japonica (Rice).